Consider the following 299-residue polypeptide: Dermonecrotic toxin LiSicTox-alphaIVA1 (299 aa).

A signal peptide spans 1-18 (MLFPTALIFGCWALVIEG). The active site involves H30. E50 and D52 together coordinate Mg(2+). The active-site Nucleophile is H66. Intrachain disulfides connect C70-C76 and C72-C217. D110 provides a ligand contact to Mg(2+).

It belongs to the arthropod phospholipase D family. Class II subfamily. Class IIa sub-subfamily. Requires Mg(2+) as cofactor. Expressed by the venom gland.

Its subcellular location is the secreted. The catalysed reaction is an N-(acyl)-sphingosylphosphocholine = an N-(acyl)-sphingosyl-1,3-cyclic phosphate + choline. It carries out the reaction an N-(acyl)-sphingosylphosphoethanolamine = an N-(acyl)-sphingosyl-1,3-cyclic phosphate + ethanolamine. It catalyses the reaction a 1-acyl-sn-glycero-3-phosphocholine = a 1-acyl-sn-glycero-2,3-cyclic phosphate + choline. The enzyme catalyses a 1-acyl-sn-glycero-3-phosphoethanolamine = a 1-acyl-sn-glycero-2,3-cyclic phosphate + ethanolamine. Its function is as follows. Dermonecrotic toxins cleave the phosphodiester linkage between the phosphate and headgroup of certain phospholipids (sphingolipid and lysolipid substrates), forming an alcohol (often choline) and a cyclic phosphate. This toxin acts on sphingomyelin (SM) with high activity. It may also act on ceramide phosphoethanolamine (CPE), lysophosphatidylcholine (LPC) and lysophosphatidylethanolamine (LPE), but not on lysophosphatidylserine (LPS), and lysophosphatidylglycerol (LPG). It acts by transphosphatidylation, releasing exclusively cyclic phosphate products as second products. Has hemolytic activity in human erythrocytes in a dose-dependent manner. In vivo, this toxin induces dermonecrosis, edema, hemorrhage, massive inflammatory response, as well as vascular permeability. In addition, thrombus formation has also been detected in dermal blood vessels. It also induces platelet aggregation. It is noteworthy that a Glu-248 replaces the Asp present in paralogs, without decrease in catalytic and hemolytic activities. The sequence is that of Dermonecrotic toxin LiSicTox-alphaIVA1 from Loxosceles intermedia (Brown spider).